The primary structure comprises 288 residues: Diaminopimelate epimerase (288 aa).

N14 and N67 together coordinate substrate. The active-site Proton donor is the C76. Substrate-binding positions include 77-78 (GN), N166, N199, and 217-218 (ER). The Proton acceptor role is filled by C226. A substrate-binding site is contributed by 227 to 228 (GT).

This sequence belongs to the diaminopimelate epimerase family. As to quaternary structure, homodimer.

Its subcellular location is the cytoplasm. It catalyses the reaction (2S,6S)-2,6-diaminopimelate = meso-2,6-diaminopimelate. It participates in amino-acid biosynthesis; L-lysine biosynthesis via DAP pathway; DL-2,6-diaminopimelate from LL-2,6-diaminopimelate: step 1/1. In terms of biological role, catalyzes the stereoinversion of LL-2,6-diaminopimelate (L,L-DAP) to meso-diaminopimelate (meso-DAP), a precursor of L-lysine and an essential component of the bacterial peptidoglycan. The polypeptide is Diaminopimelate epimerase (Bacillus thuringiensis (strain Al Hakam)).